The sequence spans 177 residues: ATP-dependent protease subunit HslV (177 aa).

The active site involves Thr7. Na(+) is bound by residues Gly162, Cys165, and Thr168.

Belongs to the peptidase T1B family. HslV subfamily. As to quaternary structure, a double ring-shaped homohexamer of HslV is capped on each side by a ring-shaped HslU homohexamer. The assembly of the HslU/HslV complex is dependent on binding of ATP.

The protein localises to the cytoplasm. The enzyme catalyses ATP-dependent cleavage of peptide bonds with broad specificity.. With respect to regulation, allosterically activated by HslU binding. Functionally, protease subunit of a proteasome-like degradation complex believed to be a general protein degrading machinery. The protein is ATP-dependent protease subunit HslV of Persephonella marina (strain DSM 14350 / EX-H1).